We begin with the raw amino-acid sequence, 475 residues long: Membrane-bound lytic murein transglycosylase F (475 aa).

The first 15 residues, 1–15, serve as a signal peptide directing secretion; the sequence is MKKLLLILCCITLLA. The tract at residues 16 to 258 is non-LT domain; that stretch reads ACQKVVVEQE…HLNEKYFAHV (243 aa). The segment at 259 to 475 is LT domain; it reads KRFDYVDTRA…KTEAAQPQQP (217 aa). Glutamate 303 is an active-site residue.

The protein in the N-terminal section; belongs to the bacterial solute-binding protein 3 family. In the C-terminal section; belongs to the transglycosylase Slt family.

Its subcellular location is the cell outer membrane. It carries out the reaction Exolytic cleavage of the (1-&gt;4)-beta-glycosidic linkage between N-acetylmuramic acid (MurNAc) and N-acetylglucosamine (GlcNAc) residues in peptidoglycan, from either the reducing or the non-reducing ends of the peptidoglycan chains, with concomitant formation of a 1,6-anhydrobond in the MurNAc residue.. Murein-degrading enzyme that degrades murein glycan strands and insoluble, high-molecular weight murein sacculi, with the concomitant formation of a 1,6-anhydromuramoyl product. Lytic transglycosylases (LTs) play an integral role in the metabolism of the peptidoglycan (PG) sacculus. Their lytic action creates space within the PG sacculus to allow for its expansion as well as for the insertion of various structures such as secretion systems and flagella. The sequence is that of Membrane-bound lytic murein transglycosylase F from Shewanella halifaxensis (strain HAW-EB4).